The primary structure comprises 281 residues: Arylamine N-acetyltransferase (281 aa).

Cysteine 69 serves as the catalytic Acyl-thioester intermediate. Residues histidine 107 and aspartate 122 contribute to the active site. N6-acetyllysine occurs at positions 214 and 281.

This sequence belongs to the arylamine N-acetyltransferase family. Homodimer. Post-translationally, acetylated on Lys-214 and Lys-281. Deacetylated by CobB.

It is found in the cytoplasm. It catalyses the reaction an arylamine + acetyl-CoA = an N-acetylarylamine + CoA. The catalysed reaction is an N-hydroxyarylamine + acetyl-CoA = an N-acetoxyarylamine + CoA. With respect to regulation, inhibited by salicylic acid, acetylsalicylic acid, 2,6-dichrolo-4-nitrophenol, N-ethylmaleimide and iodoacetamide. Functionally, catalyzes the acetyl-CoA-dependent N-acetylation of aromatic amines, and, probably, the O-acetylation of N-hydroxyarylamines. In vitro, catalyzes the N-acetylation of various arylamines such as aminobenzoic acid, aminophenol, aminotoluene, phenetidine, anisidine, aniline, isoniazid and 2-amino-fluorene. N-hydroxyarylamine O-acetyltransferase activity has not been assayed directly, however, NhoA activity is required for the mutagenicity of nitroaromatic compounds, suggesting that it also has O-acetyltransferase activity. This chain is Arylamine N-acetyltransferase (nhoA), found in Escherichia coli (strain K12).